A 66-amino-acid polypeptide reads, in one-letter code: Large ribosomal subunit protein bL35 (66 aa).

This sequence belongs to the bacterial ribosomal protein bL35 family.

This Bradyrhizobium diazoefficiens (strain JCM 10833 / BCRC 13528 / IAM 13628 / NBRC 14792 / USDA 110) protein is Large ribosomal subunit protein bL35.